A 612-amino-acid polypeptide reads, in one-letter code: uncharacterized protein (612 aa).

Transmembrane regions (helical) follow at residues 13–33 (IPLT…EWLP), 38–58 (AILV…EGIA), 67–87 (TIMA…IQII), 107–127 (GFIV…AIFL), 144–164 (LLIP…LGTS), and 189–209 (LGLL…PILL). 2 RCK C-terminal domains span residues 218–302 (GNVA…ERGI) and 316–403 (NNAG…LLVL). 6 consecutive transmembrane segments (helical) span residues 419 to 439 (AIAI…PISV), 459 to 479 (IYGA…PLGT), 501 to 521 (LSGY…TEIL), 525 to 545 (ATVV…GLNP), 546 to 566 (LAFM…PIGY), and 586 to 606 (IGAP…MLIY).

It belongs to the SLC13A/DASS transporter (TC 2.A.47) family. NADC subfamily.

It is found in the cell membrane. This is an uncharacterized protein from Synechocystis sp. (strain ATCC 27184 / PCC 6803 / Kazusa).